The sequence spans 346 residues: MSSFDYRSRLKELSARYNPEASILVNERMQSEDHYLDTDVVRYVKRSMRAVDDDYTKRTKDAGEAVKQHLNNELINVTYEYQGSVMTNTHIKGASDIDLLVICEKFEDTEINRVRDCLKTPYGYSNIQLSRLRNYELSFSLYRGDSREDLSNLRRQIESIMISKYTICDISKAKSVRITNQHLHRDVDIVTSSWFQSLEYVLDGMPKEEKGIKIYNKNLGFAEGPDFPFLSISRINQKSSESNGRLKRMIRFLKNVRTDSQKDIQLTSFDINAICYSIPVADYAYLDYKQLVYLLWSTMYHLWYDNKLDKLKSVVGDEYVFKGKPNKIEALKALEDDVFKIHQDLN.

It belongs to the CD-NTase family.

The catalysed reaction is 2 GTP = 3',3'-c-di-GMP + 2 diphosphate. Its function is as follows. Cyclic nucleotide synthase (second messenger synthase) of a CBASS antivirus system. CBASS (cyclic oligonucleotide-based antiphage signaling system) provides immunity against bacteriophage. The CD-NTase protein synthesizes cyclic nucleotides in response to infection; these serve as specific second messenger signals. The signals activate a diverse range of effectors, leading to bacterial cell death and thus abortive phage infection. A type I-D(GG) CBASS system. Cyclic dinucleotide synthase that catalyzes the synthesis of c-di-GMP, has no activity with other NTP substrates. This Lachnospiraceae bacterium (strain RUG226) protein is c-di-GMP synthase.